Reading from the N-terminus, the 126-residue chain is Large ribosomal subunit protein bL12 (126 aa).

The protein belongs to the bacterial ribosomal protein bL12 family. Homodimer. Part of the ribosomal stalk of the 50S ribosomal subunit. Forms a multimeric L10(L12)X complex, where L10 forms an elongated spine to which 2 to 4 L12 dimers bind in a sequential fashion. Binds GTP-bound translation factors.

In terms of biological role, forms part of the ribosomal stalk which helps the ribosome interact with GTP-bound translation factors. Is thus essential for accurate translation. The polypeptide is Large ribosomal subunit protein bL12 (Desulfatibacillum aliphaticivorans).